Consider the following 88-residue polypeptide: LYR motif-containing protein 2 (88 aa).

A mitochondrion-targeting transit peptide spans 1-19; sequence MAASRLPPAALTLKQFMRR.

The protein belongs to the complex I LYR family.

It is found in the mitochondrion. In terms of biological role, involved in efficient integration of the N-module into mitochondrial respiratory chain complex I. The protein is LYR motif-containing protein 2 (Lyrm2) of Mus musculus (Mouse).